Reading from the N-terminus, the 271-residue chain is Phthiotriol/phenolphthiotriol dimycocerosates methyltransferase 1 (271 aa).

Belongs to the methyltransferase superfamily. Phthiotriol/phenolphthiotriol dimycocerosates methyltransferase family.

Functionally, catalyzes the methylation of the lipid moiety of the intermediate compounds phthiotriol and glycosylated phenolphthiotriol dimycoserosates to form phthiocerol dimycocerosates (DIM A) and glycosylated phenolphthiocerol dimycocerosates (PGL). This chain is Phthiotriol/phenolphthiotriol dimycocerosates methyltransferase 1, found in Mycobacterium ulcerans (strain Agy99).